The following is a 282-amino-acid chain: Orotidine 5'-phosphate decarboxylase (282 aa).

Lys-95 acts as the Proton donor in catalysis.

Belongs to the OMP decarboxylase family. Type 2 subfamily.

It carries out the reaction orotidine 5'-phosphate + H(+) = UMP + CO2. The protein operates within pyrimidine metabolism; UMP biosynthesis via de novo pathway; UMP from orotate: step 2/2. This Polaromonas naphthalenivorans (strain CJ2) protein is Orotidine 5'-phosphate decarboxylase.